Reading from the N-terminus, the 293-residue chain is Ribosomal protein L11 methyltransferase (293 aa).

4 residues coordinate S-adenosyl-L-methionine: Thr-145, Gly-166, Asp-188, and Asn-230.

This sequence belongs to the methyltransferase superfamily. PrmA family.

The protein localises to the cytoplasm. The enzyme catalyses L-lysyl-[protein] + 3 S-adenosyl-L-methionine = N(6),N(6),N(6)-trimethyl-L-lysyl-[protein] + 3 S-adenosyl-L-homocysteine + 3 H(+). Functionally, methylates ribosomal protein L11. The protein is Ribosomal protein L11 methyltransferase of Klebsiella pneumoniae subsp. pneumoniae (strain ATCC 700721 / MGH 78578).